The primary structure comprises 118 residues: Probable dihydroneopterin aldolase (118 aa).

Residues glutamate 21, tyrosine 53, and 72–73 (IE) contribute to the substrate site. Catalysis depends on lysine 98, which acts as the Proton donor/acceptor.

This sequence belongs to the DHNA family.

It carries out the reaction 7,8-dihydroneopterin = 6-hydroxymethyl-7,8-dihydropterin + glycolaldehyde. The protein operates within cofactor biosynthesis; tetrahydrofolate biosynthesis; 2-amino-4-hydroxy-6-hydroxymethyl-7,8-dihydropteridine diphosphate from 7,8-dihydroneopterin triphosphate: step 3/4. Functionally, catalyzes the conversion of 7,8-dihydroneopterin to 6-hydroxymethyl-7,8-dihydropterin. The sequence is that of Probable dihydroneopterin aldolase (folB) from Synechocystis sp. (strain ATCC 27184 / PCC 6803 / Kazusa).